A 500-amino-acid chain; its full sequence is Glucose-1-phosphate adenylyltransferase large subunit, chloroplastic/amyloplastic (500 aa).

The N-terminal 33 residues, 1–33 (RASPPSESRAPLRAPQRSATRQHQARQGPRRMC), are a transit peptide targeting the chloroplast. The disordered stretch occupies residues 1-47 (RASPPSESRAPLRAPQRSATRQHQARQGPRRMCNGGRGPPYWTAGVT).

The protein belongs to the bacterial/plant glucose-1-phosphate adenylyltransferase family. In terms of assembly, heterotetramer.

Its subcellular location is the plastid. It localises to the chloroplast. It is found in the amyloplast. It catalyses the reaction alpha-D-glucose 1-phosphate + ATP + H(+) = ADP-alpha-D-glucose + diphosphate. It participates in glycan biosynthesis; starch biosynthesis. With respect to regulation, insensitive to 3'phosphoglycerate and orthophosphate. Functionally, this protein plays a role in synthesis of starch. It catalyzes the synthesis of the activated glycosyl donor, ADP-glucose from Glc-1-P and ATP. In Triticum aestivum (Wheat), this protein is Glucose-1-phosphate adenylyltransferase large subunit, chloroplastic/amyloplastic (AGA.7).